The following is a 604-amino-acid chain: Probable translation initiation factor IF-2 (604 aa).

Positions 18–232 constitute a tr-type G domain; it reads IRTPIVCVLG…VLIGLAQRYM (215 aa). The G1 stretch occupies residues 27–34; sequence GHVDHGKT. 27–34 contributes to the GTP binding site; sequence GHVDHGKT. Residues 52–56 are G2; the sequence is AITQH. The G3 stretch occupies residues 88-91; that stretch reads DTPG. Residues 88 to 92 and 142 to 145 each bind GTP; these read DTPGH and TKLD. The tract at residues 142 to 145 is G4; it reads TKLD. Residues 210-212 form a G5 region; the sequence is SAH.

This sequence belongs to the TRAFAC class translation factor GTPase superfamily. Classic translation factor GTPase family. IF-2 subfamily.

Its function is as follows. Function in general translation initiation by promoting the binding of the formylmethionine-tRNA to ribosomes. Seems to function along with eIF-2. The chain is Probable translation initiation factor IF-2 from Methanospirillum hungatei JF-1 (strain ATCC 27890 / DSM 864 / NBRC 100397 / JF-1).